The chain runs to 180 residues: UPF0227 protein YcfP (180 aa).

It belongs to the UPF0227 family.

This Escherichia coli O7:K1 (strain IAI39 / ExPEC) protein is UPF0227 protein YcfP.